Reading from the N-terminus, the 181-residue chain is MEEYTREPCPYRIGDDIGSAFAMGLVGGSIFQAFGGYKNAAKGKKLVGMMREVRMRSTLTGVQFAAWGGMFSTIDCCLVAIRKKEDPINSIVSGGLTGALLAIRSGPKVMAGSAILGSVILAMIEGVGLVTTRWMGAMMDPTQPPPEALDDPRSLGQKSQAEPGLDQTRPFGIPTGLPNLS.

3 helical membrane-spanning segments follow: residues 17-37 (IGSA…FGGY), 61-81 (GVQF…LVAI), and 109-129 (VMAG…GVGL). The segment at 137 to 181 (AMMDPTQPPPEALDDPRSLGQKSQAEPGLDQTRPFGIPTGLPNLS) is disordered.

The protein belongs to the Tim17/Tim22/Tim23 family.

It localises to the mitochondrion inner membrane. In terms of biological role, essential component of the TIM23 complex, a complex that mediates the translocation of transit peptide-containing proteins across the mitochondrial inner membrane. The polypeptide is Probable mitochondrial import inner membrane translocase subunit tim-17B.1 (Caenorhabditis elegans).